Here is a 274-residue protein sequence, read N- to C-terminus: Large ribosomal subunit protein uL2 (274 aa).

Residues 223–258 (VAMNPVDHPHGGGEGRTSGGRHPVTPWGIPTKGYKT) are disordered.

The protein belongs to the universal ribosomal protein uL2 family. In terms of assembly, part of the 50S ribosomal subunit. Forms a bridge to the 30S subunit in the 70S ribosome.

One of the primary rRNA binding proteins. Required for association of the 30S and 50S subunits to form the 70S ribosome, for tRNA binding and peptide bond formation. It has been suggested to have peptidyltransferase activity; this is somewhat controversial. Makes several contacts with the 16S rRNA in the 70S ribosome. This chain is Large ribosomal subunit protein uL2, found in Geotalea daltonii (strain DSM 22248 / JCM 15807 / FRC-32) (Geobacter daltonii).